The chain runs to 348 residues: Rhodopsin (348 aa).

Met1 carries the N-acetylmethionine modification. Residues 1-36 (MNGTEGPNFYVPFSNATGVVRSPFEYPQYYLAEPWQ) are Extracellular-facing. N-linked (GlcNAc...) asparagine glycosylation is found at Asn2 and Asn15. The chain crosses the membrane as a helical span at residues 37–61 (FSMLAAYMFLLIVLGFPINFLTLYV). The Cytoplasmic segment spans residues 62 to 73 (TVQHKKLRTPLN). A helical transmembrane segment spans residues 74–96 (YILLNLAVADLFMVFGGFTTTLY). Residues 97–110 (TSLHGYFVFGPTGC) are Extracellular-facing. A disulfide bridge connects residues Cys110 and Cys187. A helical transmembrane segment spans residues 111 to 133 (NLEGFFATLGGEIALWSLVVLAI). Residues 134 to 136 (ERY) carry the 'Ionic lock' involved in activated form stabilization motif. The Cytoplasmic segment spans residues 134-152 (ERYVVICKPMSNFRFGENH). The helical transmembrane segment at 153 to 173 (AIMGVVFTWIMALACAAPPLV) threads the bilayer. Residues 174 to 202 (GWSRYIPEGMQCSCGVDYYTLKPEVNNES) are Extracellular-facing. Position 201 (Glu201) interacts with Zn(2+). The chain crosses the membrane as a helical span at residues 203–224 (FVIYMFVVHFTIPLIVIFFCYG). Residues 225-252 (QLVFTVKEAAAQQQESATTQKAEKEVTR) lie on the Cytoplasmic side of the membrane. A helical transmembrane segment spans residues 253–274 (MVILMVVFFLICWFPYAGVAFY). At 275–286 (IFTHQGSNFGPI) the chain is on the extracellular side. A Zn(2+)-binding site is contributed by Gln279. The helical transmembrane segment at 287 to 308 (FMTLPAFFAKSSSIYNPVIYIM) threads the bilayer. Residue Lys296 is modified to N6-(retinylidene)lysine. Residues 309–348 (MNKQFRNCMLTTLCCGKNILGDDEASATASKTETSQVAPA) are Cytoplasmic-facing. 2 S-palmitoyl cysteine lipidation sites follow: Cys322 and Cys323. The interval 330–348 (DDEASATASKTETSQVAPA) is interaction with SAG. Ser334 bears the Phosphoserine mark. Residue Thr336 is modified to Phosphothreonine. Ser338 is subject to Phosphoserine. Thr340 and Thr342 each carry phosphothreonine. Ser343 is modified (phosphoserine).

This sequence belongs to the G-protein coupled receptor 1 family. Opsin subfamily. In terms of assembly, homodimer. May form a complex composed of RHO, GRK1 and RCVRN in a Ca(2+)-dependent manner; RCVRN prevents the interaction between GRK1 and RHO. Interacts with GRK1. Interacts (phosphorylated form) with SAG. Interacts with GNAT1. Interacts with GNAT3. SAG and G-proteins compete for a common binding site. Interacts with PRCD; the interaction promotes PRCD stability. Forms a complex with ASAP1 and ARF4. Forms a complex with ASAP1, RAB11A, Rabin8/RAB3IP, ARF4 and RAB11FIP3; the complex regulates Golgi-to-cilia rhodopsin/RHO transport in photoreceptors. In terms of processing, phosphorylated on some or all of the serine and threonine residues present in the C-terminal region. Post-translationally, contains one covalently linked retinal chromophore. Upon light absorption, the covalently bound 11-cis-retinal is converted to all-trans-retinal. After hydrolysis of the Schiff base and release of the covalently bound all-trans-retinal, active rhodopsin is regenerated by binding of a fresh molecule of 11-cis-retinal.

It is found in the membrane. The protein resides in the cell projection. Its subcellular location is the cilium. The protein localises to the photoreceptor outer segment. Its function is as follows. Photoreceptor required for image-forming vision at low light intensity. Required for photoreceptor cell viability after birth. Light-induced isomerization of 11-cis to all-trans retinal triggers a conformational change that activates signaling via G-proteins. Subsequent receptor phosphorylation mediates displacement of the bound G-protein alpha subunit by the arrestin SAG and terminates signaling. The chain is Rhodopsin (RHO) from Cricetulus griseus (Chinese hamster).